Reading from the N-terminus, the 286-residue chain is ATP synthase gamma chain (286 aa).

The protein belongs to the ATPase gamma chain family. F-type ATPases have 2 components, CF(1) - the catalytic core - and CF(0) - the membrane proton channel. CF(1) has five subunits: alpha(3), beta(3), gamma(1), delta(1), epsilon(1). CF(0) has three main subunits: a, b and c.

The protein localises to the cell inner membrane. Produces ATP from ADP in the presence of a proton gradient across the membrane. The gamma chain is believed to be important in regulating ATPase activity and the flow of protons through the CF(0) complex. This chain is ATP synthase gamma chain, found in Pseudomonas putida (strain W619).